The chain runs to 188 residues: Elongation factor P-like protein (188 aa).

The protein belongs to the elongation factor P family.

This Aliivibrio fischeri (strain ATCC 700601 / ES114) (Vibrio fischeri) protein is Elongation factor P-like protein.